The primary structure comprises 157 residues: MRIGHGFDVHKFGGEGPIIIGGVRIPYEQGLLAHSDGDVALHAATDALLGAAALGDIGKLFPDTDPAFKGVDSRKLLREAYSRIREKGYRIGNLDITIIAQAPKMLPHIPQMRVNLAEDLQCHIDDINVKATTTEKLGFVGRKEGIACEAVALLVKE.

Positions 8 and 10 each coordinate a divalent metal cation. 4-CDP-2-C-methyl-D-erythritol 2-phosphate contacts are provided by residues 8 to 10 (DVH) and 34 to 35 (HS). His42 lines the a divalent metal cation pocket. 4-CDP-2-C-methyl-D-erythritol 2-phosphate-binding positions include 56–58 (DIG), 61–65 (FPDTD), 100–106 (AQAPKML), 132–135 (TTTE), Phe139, and Arg142.

Belongs to the IspF family. Homotrimer. It depends on a divalent metal cation as a cofactor.

It catalyses the reaction 4-CDP-2-C-methyl-D-erythritol 2-phosphate = 2-C-methyl-D-erythritol 2,4-cyclic diphosphate + CMP. It functions in the pathway isoprenoid biosynthesis; isopentenyl diphosphate biosynthesis via DXP pathway; isopentenyl diphosphate from 1-deoxy-D-xylulose 5-phosphate: step 4/6. Functionally, involved in the biosynthesis of isopentenyl diphosphate (IPP) and dimethylallyl diphosphate (DMAPP), two major building blocks of isoprenoid compounds. Catalyzes the conversion of 4-diphosphocytidyl-2-C-methyl-D-erythritol 2-phosphate (CDP-ME2P) to 2-C-methyl-D-erythritol 2,4-cyclodiphosphate (ME-CPP) with a corresponding release of cytidine 5-monophosphate (CMP). This Photorhabdus laumondii subsp. laumondii (strain DSM 15139 / CIP 105565 / TT01) (Photorhabdus luminescens subsp. laumondii) protein is 2-C-methyl-D-erythritol 2,4-cyclodiphosphate synthase.